Consider the following 684-residue polypeptide: Chaperone protein HtpG (684 aa).

Residues 1 to 329 are a; substrate-binding; it reads MSKKGTIGVT…SPDIPLNVSR (329 aa). The interval 330–548 is b; the sequence is SYLQSDANVK…FMRRMRDMAQ (219 aa). A c region spans residues 549–684; that stretch reads LQPGMSFYGE…EFIRRSQRLL (136 aa).

The protein belongs to the heat shock protein 90 family. In terms of assembly, homodimer.

It is found in the cytoplasm. Its function is as follows. Molecular chaperone. Has ATPase activity. This is Chaperone protein HtpG from Porphyromonas gingivalis (strain ATCC 33277 / DSM 20709 / CIP 103683 / JCM 12257 / NCTC 11834 / 2561).